An 810-amino-acid polypeptide reads, in one-letter code: Cell division control protein 48 homolog E (810 aa).

Ser-2 is modified (N-acetylserine). Ser-41 is subject to Phosphoserine. Residues 248–255 and 521–528 each bind ATP; these read GPPGSGKT and GPPGCGKT.

It belongs to the AAA ATPase family.

It localises to the nucleus. The protein resides in the cytoplasm. It is found in the cytoskeleton. The protein localises to the phragmoplast. In terms of biological role, probably functions in cell division and growth processes. Interacts with certain SNAREs as part of specialized membrane fusion events where vesicles from the same organelle fuse (homotypic fusion). This chain is Cell division control protein 48 homolog E (CDC48E), found in Arabidopsis thaliana (Mouse-ear cress).